The sequence spans 502 residues: Cytochrome P450 monooxygenase pyr9 (502 aa).

Residues 5-25 (EDASIGTVWVTCLLAVGLYFI) traverse the membrane as a helical segment. Asn-205, Asn-291, and Asn-372 each carry an N-linked (GlcNAc...) asparagine glycan. Cys-437 contacts heme.

It belongs to the cytochrome P450 family. Heme is required as a cofactor.

The protein localises to the membrane. It functions in the pathway secondary metabolite biosynthesis; terpenoid biosynthesis. Its function is as follows. Cytochrome P450 monooxygenase; part of the gene cluster that mediates the biosynthesis of pyripyropene A, a specific human acyl-coenzyme A:cholesterol acyltransferase 2 inhibitor. The first step of the pathway is the synthesis of nicotinyl-CoA from nicotinic acid by the nicotinic acid-CoA ligase pyr1. Nicotinyl-CoA is then a substrate of polyketide synthase pyr2 to produce 4-hydroxy-6-(3-pyridinyl)-2H-pyran-2-one (HPPO) which is further prenylated by the polyprenyl transferase pyr6 to yield farnesyl-HPPO. The next steps consist of an epoxidation of farnesyl-HPPO to epoxyfarnesyl-HPPO by FAD-dependent monooxygenase pyr5 and a cyclization of the terpenoid portion by the terpene cyclase pyr4 to yield deacetyl-pyripyropene E. The 2 cytochrome P450 monooxygenases pyr3 and pyr9, and the 2 acetyltransferases pyr7 and pyr8 are involved in the conversion of deacetyl-pyripyropene E into pyripyropene A through several cycles of oxidation and acetylation steps. Pyr7 acetylates deacetyl-pyripyropene E to pyripyropene E which is oxidized to 11-deacetyl-pyripyropene O by pyr3, which is in turn acetylated into pyripyropene O by pyr8. Pyripyropene O is then oxidized to deacetyl-pyripyropene A by pyr9. Deacetyl-pyripyropene A is finally acetylated to pyripyropene A by pyr8. This chain is Cytochrome P450 monooxygenase pyr9, found in Aspergillus fumigatus (strain ATCC MYA-4609 / CBS 101355 / FGSC A1100 / Af293) (Neosartorya fumigata).